Consider the following 2006-residue polypeptide: Supporter of activation of yellow protein (2006 aa).

Disordered stretches follow at residues 1-208, 313-347, 458-564, 744-794, 821-916, 929-1029, 1044-1082, and 1099-1196; these read MNDL…RRVE, MPAKNDAHLSSLSPASASSSSASSSSSSSSSSSLA, EEKP…AQSQ, DTQD…DPAR, DLEG…KSRR, VSVG…NNNS, CSSSSSTSSGAAANQQVIGGSGSSSMLPPTTILSSSDPL, and QQLR…SAVA. Positions 10 to 60 are enriched in low complexity; sequence VAATSSSGSESGTAVESAAATSTAGSAGAAGRPQSNCSANSNAKSVAASST. A compositionally biased stretch (polar residues) spans 67-81; that stretch reads VSSTSSPAQRDQQLN. Pro residues predominate over residues 118–128; the sequence is SPPPTLPPPTT. Positions 129–168 are enriched in low complexity; that stretch reads PCDDAPSTTGASASASSASGEAPSAASAAGAAGGPMAATA. Polar residues predominate over residues 189–199; it reads ANPNSNANESQ. Over residues 321–347 the composition is skewed to low complexity; that stretch reads LSSLSPASASSSSASSSSSSSSSSSLA. The segment covering 485–494 has biased composition (polar residues); that stretch reads GGESNSSSQE. Basic and acidic residues predominate over residues 525 to 534; sequence SLSKEHDPKI. The span at 543–563 shows a compositional bias: low complexity; sequence ASNGIASGGSKASKASKSAQS. The span at 744–758 shows a compositional bias: basic and acidic residues; sequence DTQDNNNENHLKRTN. Polar residues-rich tracts occupy residues 759–769 and 828–844; these read SEGNESPSSRL and PPTQQQSISTPDQNGAL. Over residues 861–870 the composition is skewed to pro residues; the sequence is PATPQPPPVA. Basic and acidic residues-rich tracts occupy residues 936 to 945 and 963 to 972; these read ADMKAKEKES and ESPKTRDHRP. 2 stretches are compositionally biased toward low complexity: residues 978 to 990 and 1018 to 1029; these read RTTTSTNTNLQPT and SSESESNNNNNS. Positions 1053–1080 are enriched in polar residues; the sequence is GAAANQQVIGGSGSSSMLPPTTILSSSD. Positions 1103 to 1112 are enriched in low complexity; that stretch reads SSRPSSISCG. Residues 1147–1158 are compositionally biased toward basic residues; that stretch reads GRGRGRRSRGGR. A compositionally biased stretch (low complexity) spans 1161–1173; the sequence is GSSSVDRAVSVGG. The interval 1340-1573 is SAY; the sequence is MIQEQVALYL…PPTDLMAQLL (234 aa). The interval 1579–1685 is disordered; it reads AVGSDEIKTS…AGSEDEDGNE (107 aa). Composition is skewed to low complexity over residues 1627 to 1652 and 1660 to 1677; these read TASSSSTSSAQSVSSASSGNGSSSDT and FSSTSSCSSSTGASSGAG. The segment at 1694–1751 adopts a PHD-type 1; degenerate zinc-finger fold; that stretch reads TCGVCLRSQHRNARDMPEAFIRCYTCRKRVHPSCVDMPPRMVGRVRNYNWQCAGCKCC. Residues 1753–1796 form a PHD-type 2; degenerate zinc finger; the sequence is KCRSSQRPGKMLYCEQCDRGYHIYCLGLRTVPDGRWSCERCCFC. Positions 1887 to 1911 are disordered; that stretch reads TSAQTDDSPMPSPGLTTNGGRALSP.

The protein belongs to the SAYP family. In terms of tissue distribution, widely expressed. Highly expressed in ovary. Expressed in nursing cells and growing oocytes at all stages of development and accumulates in mature oocytes. Expressed in the nuclei of syncytium blastoderm of early embryos and in the nuclei of different tissues of late embryos, larvae, and adults.

It is found in the nucleus. The protein resides in the cytoplasm. The protein localises to the chromosome. Essential transcription regulator during early development. Coactivates transcription of some euchromatin genes and repress transcription in of euchromatin genes translocated to heterochromatin. This chain is Supporter of activation of yellow protein (e(y)3), found in Drosophila melanogaster (Fruit fly).